We begin with the raw amino-acid sequence, 258 residues long: Acetylglutamate kinase (258 aa).

Residues 41 to 42, R63, and N156 contribute to the substrate site; that span reads GG.

This sequence belongs to the acetylglutamate kinase family. ArgB subfamily.

The protein localises to the cytoplasm. The catalysed reaction is N-acetyl-L-glutamate + ATP = N-acetyl-L-glutamyl 5-phosphate + ADP. The protein operates within amino-acid biosynthesis; L-arginine biosynthesis; N(2)-acetyl-L-ornithine from L-glutamate: step 2/4. In terms of biological role, catalyzes the ATP-dependent phosphorylation of N-acetyl-L-glutamate. The protein is Acetylglutamate kinase of Geobacillus thermodenitrificans (strain NG80-2).